Reading from the N-terminus, the 217-residue chain is Small ribosomal subunit protein uS3 (217 aa).

The KH type-2 domain occupies 38–106; sequence IRKFIQKELA…QVHINIVEIK (69 aa).

Belongs to the universal ribosomal protein uS3 family. As to quaternary structure, part of the 30S ribosomal subunit. Forms a tight complex with proteins S10 and S14.

In terms of biological role, binds the lower part of the 30S subunit head. Binds mRNA in the 70S ribosome, positioning it for translation. This is Small ribosomal subunit protein uS3 from Streptococcus thermophilus (strain CNRZ 1066).